We begin with the raw amino-acid sequence, 65 residues long: Large ribosomal subunit protein bL35 (65 aa).

Residues 1–23 (MPKIKTNRGAAKRFKKTGTGKVK) form a disordered region. Residues 10–23 (AAKRFKKTGTGKVK) are compositionally biased toward basic residues.

This sequence belongs to the bacterial ribosomal protein bL35 family.

This Trichlorobacter lovleyi (strain ATCC BAA-1151 / DSM 17278 / SZ) (Geobacter lovleyi) protein is Large ribosomal subunit protein bL35.